We begin with the raw amino-acid sequence, 130 residues long: Transcription antitermination protein NusB (130 aa).

This sequence belongs to the NusB family.

Functionally, involved in transcription antitermination. Required for transcription of ribosomal RNA (rRNA) genes. Binds specifically to the boxA antiterminator sequence of the ribosomal RNA (rrn) operons. This is Transcription antitermination protein NusB from Macrococcus caseolyticus (strain JCSC5402) (Macrococcoides caseolyticum).